We begin with the raw amino-acid sequence, 69 residues long: VLIIAVLFLTACQLTTAETSSRGKQKHRALRSTDKNSRMSKRCTPPGGYCYHPDPCCSQVCNFPRKHCL.

The N-terminal stretch at Val-1–Ala-17 is a signal peptide. The propeptide occupies Glu-18–Ser-40. The segment at Ser-20–Lys-41 is disordered. 3 disulfides stabilise this stretch: Cys-43/Cys-57, Cys-50/Cys-61, and Cys-56/Cys-68.

The protein belongs to the conotoxin O1 superfamily. As to expression, expressed by the venom duct.

The protein resides in the secreted. This is Conotoxin AbVIF from Conus abbreviatus (Abbreviated cone).